We begin with the raw amino-acid sequence, 1116 residues long: Protein translocase subunit SecA (1116 aa).

ATP-binding positions include Q177, 195–199, and D692; that span reads GEGKT.

Belongs to the SecA family. As to quaternary structure, monomer and homodimer. Part of the essential Sec protein translocation apparatus which comprises SecA, SecYEG and auxiliary proteins SecDF. Other proteins may also be involved.

The protein localises to the cell inner membrane. It localises to the cytoplasm. It catalyses the reaction ATP + H2O + cellular proteinSide 1 = ADP + phosphate + cellular proteinSide 2.. Part of the Sec protein translocase complex. Interacts with the SecYEG preprotein conducting channel. Has a central role in coupling the hydrolysis of ATP to the transfer of proteins into and across the cell membrane, serving as an ATP-driven molecular motor driving the stepwise translocation of polypeptide chains across the membrane. The polypeptide is Protein translocase subunit SecA (Flavobacterium psychrophilum (strain ATCC 49511 / DSM 21280 / CIP 103535 / JIP02/86)).